The chain runs to 500 residues: Glycerol kinase (500 aa).

T16 serves as a coordination point for ADP. Residues T16 and T17 each coordinate ATP. T16 contacts sn-glycerol 3-phosphate. Residue R20 participates in ADP binding. R86, E87, Y138, and D243 together coordinate sn-glycerol 3-phosphate. 5 residues coordinate glycerol: R86, E87, Y138, D243, and Q244. ADP is bound by residues T265 and G313. The ATP site is built by T265, G313, Q317, and G414. 2 residues coordinate ADP: G414 and N418.

This sequence belongs to the FGGY kinase family.

The catalysed reaction is glycerol + ATP = sn-glycerol 3-phosphate + ADP + H(+). It participates in polyol metabolism; glycerol degradation via glycerol kinase pathway; sn-glycerol 3-phosphate from glycerol: step 1/1. With respect to regulation, inhibited by fructose 1,6-bisphosphate (FBP). In terms of biological role, key enzyme in the regulation of glycerol uptake and metabolism. Catalyzes the phosphorylation of glycerol to yield sn-glycerol 3-phosphate. The sequence is that of Glycerol kinase from Trichormus variabilis (strain ATCC 29413 / PCC 7937) (Anabaena variabilis).